Here is a 236-residue protein sequence, read N- to C-terminus: Urease accessory protein UreG (236 aa).

Positions 1 to 26 (MHDHSLHSGHDHGLGPGSFHDRGAPH) are disordered. 42 to 49 (GPVGSGKT) is a GTP binding site.

Belongs to the SIMIBI class G3E GTPase family. UreG subfamily. Homodimer. UreD, UreF and UreG form a complex that acts as a GTP-hydrolysis-dependent molecular chaperone, activating the urease apoprotein by helping to assemble the nickel containing metallocenter of UreC. The UreE protein probably delivers the nickel.

It localises to the cytoplasm. Functionally, facilitates the functional incorporation of the urease nickel metallocenter. This process requires GTP hydrolysis, probably effectuated by UreG. The polypeptide is Urease accessory protein UreG (Anaeromyxobacter sp. (strain Fw109-5)).